Consider the following 377-residue polypeptide: Compound eye opsin BCRH1 (377 aa).

Residues 1–53 (MANVTGPQMAFYGSGAATFGYPEGMTVADFVPDRVKHMVLDHWYNYPPVNPMW) lie on the Extracellular side of the membrane. An N-linked (GlcNAc...) asparagine glycan is attached at asparagine 3. A helical transmembrane segment spans residues 54-78 (HYLLGVVYLFLGVISIAGNGLVIYL). Residues 79-90 (YMKSQALKTPAN) are Cytoplasmic-facing. A helical membrane pass occupies residues 91–115 (MLIVNLALSDLIMLTTNFPPFCYNC). Residues 116-131 (FSGGRWMFSGTYCEIY) lie on the Extracellular side of the membrane. Cysteines 128 and 205 form a disulfide. The chain crosses the membrane as a helical span at residues 132–151 (AALGAITGVCSIWTLCMISF). At 152-170 (DRYNIICNGFNGPKLTQGK) the chain is on the cytoplasmic side. A helical membrane pass occupies residues 171–194 (ATFMCGLAWVISVGWSLPPFFGWG). Over 195–218 (SYTLEGILDSCSYDYFTRDMNTIT) the chain is Extracellular. Residues 219 to 246 (YNICIFIFDFFLPASVIVFSYVFIVKAI) traverse the membrane as a helical segment. Residues 247–281 (FAHEAAMRAQAKKMNVTNLRSNEAETQRAEIRIAK) are Cytoplasmic-facing. A helical membrane pass occupies residues 282 to 305 (TALVNVSLWFICWTPYAAITIQGL). At 306 to 313 (LGNAEGIT) the chain is on the extracellular side. The chain crosses the membrane as a helical span at residues 314 to 338 (PLLTTLPALLAKSCSCYNPFVYAIS). Lysine 325 bears the N6-(retinylidene)lysine mark. Over 339 to 377 (HPKFRLAITQHLPWFCVHEKDPNDVEENQSSNTQTQEKS) the chain is Cytoplasmic.

This sequence belongs to the G-protein coupled receptor 1 family. Opsin subfamily. Post-translationally, phosphorylated on some or all of the serine and threonine residues present in the C-terminal region. As to expression, expressed in all of the seven retinular cells (R1-R7) forming the main rhabdom in each ommatidium.

Its subcellular location is the membrane. In terms of biological role, visual pigments are the light-absorbing molecules that mediate vision. They consist of an apoprotein, opsin, covalently linked to cis-retinal. This opsin produces visual pigments with maximal absorption in the blue-green region of the spectrum. This is Compound eye opsin BCRH1 from Hemigrapsus sanguineus (Asian shore crab).